Here is a 332-residue protein sequence, read N- to C-terminus: D-lactate dehydrogenase (332 aa).

NAD(+)-binding positions include Arg-155–Ile-156, Asp-175, Val-206–Pro-207, Asn-212, and Phe-233–Arg-235. Active-site residues include Arg-235 and Glu-264. Residue His-296 is the Proton donor of the active site.

Belongs to the D-isomer specific 2-hydroxyacid dehydrogenase family. As to quaternary structure, homodimer.

It catalyses the reaction (R)-lactate + NAD(+) = pyruvate + NADH + H(+). In Lactiplantibacillus pentosus (Lactobacillus pentosus), this protein is D-lactate dehydrogenase.